We begin with the raw amino-acid sequence, 278 residues long: Large ribosomal subunit protein uL2 (278 aa).

A disordered region spans residues 202 to 278 (ANINDGKAGR…IMRSRHQRKK (77 aa)).

This sequence belongs to the universal ribosomal protein uL2 family. Part of the 50S ribosomal subunit. Forms a bridge to the 30S subunit in the 70S ribosome.

Functionally, one of the primary rRNA binding proteins. Required for association of the 30S and 50S subunits to form the 70S ribosome, for tRNA binding and peptide bond formation. It has been suggested to have peptidyltransferase activity; this is somewhat controversial. Makes several contacts with the 16S rRNA in the 70S ribosome. The protein is Large ribosomal subunit protein uL2 of Rhizobium johnstonii (strain DSM 114642 / LMG 32736 / 3841) (Rhizobium leguminosarum bv. viciae).